The following is a 257-amino-acid chain: Imidazole glycerol phosphate synthase subunit HisF (257 aa).

Residues Asp12 and Asp131 contribute to the active site.

It belongs to the HisA/HisF family. Heterodimer of HisH and HisF.

The protein localises to the cytoplasm. It carries out the reaction 5-[(5-phospho-1-deoxy-D-ribulos-1-ylimino)methylamino]-1-(5-phospho-beta-D-ribosyl)imidazole-4-carboxamide + L-glutamine = D-erythro-1-(imidazol-4-yl)glycerol 3-phosphate + 5-amino-1-(5-phospho-beta-D-ribosyl)imidazole-4-carboxamide + L-glutamate + H(+). Its pathway is amino-acid biosynthesis; L-histidine biosynthesis; L-histidine from 5-phospho-alpha-D-ribose 1-diphosphate: step 5/9. IGPS catalyzes the conversion of PRFAR and glutamine to IGP, AICAR and glutamate. The HisF subunit catalyzes the cyclization activity that produces IGP and AICAR from PRFAR using the ammonia provided by the HisH subunit. This Burkholderia mallei (strain NCTC 10247) protein is Imidazole glycerol phosphate synthase subunit HisF.